Reading from the N-terminus, the 515-residue chain is Maturase K (515 aa).

Belongs to the intron maturase 2 family. MatK subfamily.

It localises to the plastid. Its subcellular location is the chloroplast. Functionally, usually encoded in the trnK tRNA gene intron. Probably assists in splicing its own and other chloroplast group II introns. In Pseudotsuga menziesii (Douglas-fir), this protein is Maturase K.